The sequence spans 319 residues: Acetyl-coenzyme A carboxylase carboxyl transferase subunit beta, chloroplastic (319 aa).

The 273-residue stretch at 47 to 319 (LWVQCDNCES…ELFYVLQSSS (273 aa)) folds into the CoA carboxyltransferase N-terminal domain. Positions 51, 54, 70, and 73 each coordinate Zn(2+). The C4-type zinc finger occupies 51-73 (CDNCESLLYIRFLRENKSVCEEC).

The protein belongs to the AccD/PCCB family. In terms of assembly, acetyl-CoA carboxylase is a heterohexamer composed of biotin carboxyl carrier protein, biotin carboxylase and 2 subunits each of ACCase subunit alpha and ACCase plastid-coded subunit beta (accD). The cofactor is Zn(2+).

The protein resides in the plastid. The protein localises to the chloroplast stroma. It catalyses the reaction N(6)-carboxybiotinyl-L-lysyl-[protein] + acetyl-CoA = N(6)-biotinyl-L-lysyl-[protein] + malonyl-CoA. Its pathway is lipid metabolism; malonyl-CoA biosynthesis; malonyl-CoA from acetyl-CoA: step 1/1. Component of the acetyl coenzyme A carboxylase (ACC) complex. Biotin carboxylase (BC) catalyzes the carboxylation of biotin on its carrier protein (BCCP) and then the CO(2) group is transferred by the transcarboxylase to acetyl-CoA to form malonyl-CoA. The protein is Acetyl-coenzyme A carboxylase carboxyl transferase subunit beta, chloroplastic of Picea abies (Norway spruce).